The sequence spans 189 residues: Putative manganese efflux pump MntP (189 aa).

Transmembrane regions (helical) follow at residues 6–26 (IFGI…AAGV), 39–59 (LAWH…YAGL), 71–91 (WIAF…SFDA), 106–126 (LVLL…SLSV), 131–151 (VWMP…GGLM), and 169–189 (VGAG…GVFY).

This sequence belongs to the MntP (TC 9.B.29) family.

It is found in the cell inner membrane. Probably functions as a manganese efflux pump. In Desulfosudis oleivorans (strain DSM 6200 / JCM 39069 / Hxd3) (Desulfococcus oleovorans), this protein is Putative manganese efflux pump MntP.